A 491-amino-acid polypeptide reads, in one-letter code: uncharacterized protein (491 aa).

Position 267–274 (267–274 (GIQGTGKS)) interacts with ATP.

Belongs to the AAA ATPase family. Highly divergent.

The protein localises to the plastid. It localises to the chloroplast. This is an uncharacterized protein from Gracilaria tenuistipitata var. liui (Red alga).